The chain runs to 352 residues: MDATSIITQVSRDDEQLNVYPSYPNDKDAWLGFSGSVWLPDCPADHAQLTHDVDRLKPQKRGLFHSLLCCWRRNRTKTNQNGTQIDGSTTPPPLPDQQRYLLPQVRLTDMHRKCMVIDLDETLVHSSFKPIPNADFIVPVEIDGTVHQVYVLKRPHVDEFLQKMGELYECVLFTASLAKYADPVADLLDKWNVFRARLFRESCVYYRGNYIKDLNRLGRDLQKIVIVDNSPASYIFHPDNAVPVKSWFDDVTDCELRELIPLFEKLSKVDSVYSVLCNSNQPLNNQTNQQQHPQELQQAPNQLHQQLQQQQQQQTISATTVITQATTLSAPTMLNQQQTSPPSPQSELLQKT.

Residues Met-1–Leu-102 form a prion-like domain necessary for both protein assembly and membrane targeting region. The segment at Pro-103–Ser-267 is mediates substrate recognition. Positions Thr-108–Leu-266 constitute an FCP1 homology domain. Disordered regions lie at residues Asn-284–Gln-310 and Thr-332–Thr-352.

Monomer. Forms higher-order protein aggregates with amyloid-like features during gastrulation. Interacts with babo, dah, Irk1, pch2, Ras64B, sax and Src64B.

The protein localises to the cell membrane. The enzyme catalyses O-phospho-L-seryl-[protein] + H2O = L-seryl-[protein] + phosphate. Its activity is regulated as follows. Phosphatase activity requires amyloid-like aggregation on the membrane. Prion-like membrane-associated phosphatase. Phosphatase activity depends on amyloid-like assembly at the membrane. Might have a role in establishment of segment polarity in embryos. This chain is Phosphatase Herzog, found in Drosophila melanogaster (Fruit fly).